A 247-amino-acid polypeptide reads, in one-letter code: 5'-nucleotidase SurE (247 aa).

A divalent metal cation-binding residues include Asp-8, Asp-9, Ser-39, and Asn-91.

The protein belongs to the SurE nucleotidase family. The cofactor is a divalent metal cation.

It is found in the cytoplasm. It carries out the reaction a ribonucleoside 5'-phosphate + H2O = a ribonucleoside + phosphate. Nucleotidase that shows phosphatase activity on nucleoside 5'-monophosphates. This Pelobacter propionicus (strain DSM 2379 / NBRC 103807 / OttBd1) protein is 5'-nucleotidase SurE.